The chain runs to 80 residues: SPbeta prophage-derived thioredoxin-like protein YosR (80 aa).

Residues 1–80 (MRLIKLEQPN…ELDELLKELR (80 aa)) form the Thioredoxin domain. Cys-11 and Cys-14 are disulfide-bonded.

The protein belongs to the thioredoxin family.

This Bacillus subtilis (strain 168) protein is SPbeta prophage-derived thioredoxin-like protein YosR (yosR).